The chain runs to 70 residues: DNA gyrase inhibitor YacG (70 aa).

Zn(2+)-binding residues include Cys-9, Cys-12, Cys-28, and Cys-32. Positions 43–70 (ESRKIPGSSIDPESIVTTNNKQDNVDEQ) are disordered.

Belongs to the DNA gyrase inhibitor YacG family. In terms of assembly, interacts with GyrB. It depends on Zn(2+) as a cofactor.

Functionally, inhibits all the catalytic activities of DNA gyrase by preventing its interaction with DNA. Acts by binding directly to the C-terminal domain of GyrB, which probably disrupts DNA binding by the gyrase. This Legionella pneumophila (strain Corby) protein is DNA gyrase inhibitor YacG.